The sequence spans 158 residues: 2-C-methyl-D-erythritol 2,4-cyclodiphosphate synthase (158 aa).

A divalent metal cation contacts are provided by Asp8 and His10. 4-CDP-2-C-methyl-D-erythritol 2-phosphate-binding positions include 8 to 10 (DVH) and 34 to 35 (HS). His42 lines the a divalent metal cation pocket. Residues 56–58 (DIG), 61–65 (FPDTD), 100–106 (AQVPKMA), 132–135 (TTTE), Phe139, and Arg142 contribute to the 4-CDP-2-C-methyl-D-erythritol 2-phosphate site.

It belongs to the IspF family. Homotrimer. The cofactor is a divalent metal cation.

The enzyme catalyses 4-CDP-2-C-methyl-D-erythritol 2-phosphate = 2-C-methyl-D-erythritol 2,4-cyclic diphosphate + CMP. It functions in the pathway isoprenoid biosynthesis; isopentenyl diphosphate biosynthesis via DXP pathway; isopentenyl diphosphate from 1-deoxy-D-xylulose 5-phosphate: step 4/6. In terms of biological role, involved in the biosynthesis of isopentenyl diphosphate (IPP) and dimethylallyl diphosphate (DMAPP), two major building blocks of isoprenoid compounds. Catalyzes the conversion of 4-diphosphocytidyl-2-C-methyl-D-erythritol 2-phosphate (CDP-ME2P) to 2-C-methyl-D-erythritol 2,4-cyclodiphosphate (ME-CPP) with a corresponding release of cytidine 5-monophosphate (CMP). The sequence is that of 2-C-methyl-D-erythritol 2,4-cyclodiphosphate synthase from Sodalis glossinidius (strain morsitans).